A 116-amino-acid chain; its full sequence is MRHKHGYRKLSRTSSHRKALLKNLAIAIIEREKIETTVPKAKELKRYIERLVTVARNADFNTHRQVFAALQSKEATKKLINEIAPKYEGRNGGYTSIVKTRIRKGDATPMAFISFI.

Belongs to the bacterial ribosomal protein bL17 family. As to quaternary structure, part of the 50S ribosomal subunit. Contacts protein L32.

In Aliarcobacter butzleri (strain RM4018) (Arcobacter butzleri), this protein is Large ribosomal subunit protein bL17.